The primary structure comprises 637 residues: MAETAASPAHKVYNIAHWSDGYISVNGQGEVEICPDRGRSDARINLPALTRSLAEAGVPLPVLIRFTDILHDRVNKLCNAFNKVTQEQGYRGRYTAVYPIKVNQQRRVVEELLSAEPAASANQVGLEAGSKPELMAVLALAKQAGSVIVCNGYKDREYIRLALIGQKLGHRVFIVVEKQSELPLILEEAKKLGISPLIGVRARLATIGKGNWQNTGGEKSKFGLSASQVLDVVDTLKQAGALGTLQLLHFHLGSQIANIRDIQTGLRECARFYTELHAMGAPIGTVDIGGGLGVDYEGTRSRSSCSMNYSVFEYAYNVVHVLQSECDRQGIPHPDLISESGRALTAHHSVLVTNVIDREYPDNREPTEPAAEAPAPLQDLWRDLESLQDEDSPRSLAEIYHDILHAMADVHAQFAHGLLSLQERAQAETLYVRCCRMLRAELDSANRAHREIIDELNEKLAEKLFVNFSLFQSLPDVWGIDQIFPVMPINGLNRSLNRRAVIQDITCDSDGRIDQYVDGQGIETTLPLPEHDPESPLLMGFFMTGAYQEILGDMHNLFGDTHSVDVKLDQQGQYQVGEPITGDTVAKVLRYVNFEPANLLEAYRQKFRHSGLSEELQQTLLAELSSGLEGYTYLEEG.

K101 bears the N6-(pyridoxal phosphate)lysine mark. V286–Y296 provides a ligand contact to substrate.

The protein belongs to the Orn/Lys/Arg decarboxylase class-II family. SpeA subfamily. The cofactor is Mg(2+). Requires pyridoxal 5'-phosphate as cofactor.

It catalyses the reaction L-arginine + H(+) = agmatine + CO2. Its pathway is amine and polyamine biosynthesis; agmatine biosynthesis; agmatine from L-arginine: step 1/1. In terms of biological role, catalyzes the biosynthesis of agmatine from arginine. The chain is Biosynthetic arginine decarboxylase from Marinobacter nauticus (strain ATCC 700491 / DSM 11845 / VT8) (Marinobacter aquaeolei).